Consider the following 137-residue polypeptide: uncharacterized protein (137 aa).

Residues 116–137 (ARPPRGSGGTRTARNGARTASE) form a disordered region. Polar residues predominate over residues 125–137 (TRTARNGARTASE).

This is an uncharacterized protein from Mycobacterium bovis (strain ATCC BAA-935 / AF2122/97).